Reading from the N-terminus, the 331-residue chain is ADP-L-glycero-D-manno-heptose-6-epimerase (331 aa).

NADP(+) contacts are provided by residues 11–12 (FI), 32–33 (DN), lysine 39, lysine 54, 75–79 (EGACS), and asparagine 92. Catalysis depends on tyrosine 139, which acts as the Proton acceptor. Lysine 143 lines the NADP(+) pocket. Substrate is bound at residue asparagine 168. Residues valine 169 and lysine 177 each coordinate NADP(+). Lysine 177 acts as the Proton acceptor in catalysis. Substrate is bound by residues arginine 179, histidine 186, 200 to 203 (FGEY), arginine 213, and tyrosine 292.

This sequence belongs to the NAD(P)-dependent epimerase/dehydratase family. HldD subfamily. As to quaternary structure, homopentamer. Requires NADP(+) as cofactor.

It carries out the reaction ADP-D-glycero-beta-D-manno-heptose = ADP-L-glycero-beta-D-manno-heptose. The protein operates within nucleotide-sugar biosynthesis; ADP-L-glycero-beta-D-manno-heptose biosynthesis; ADP-L-glycero-beta-D-manno-heptose from D-glycero-beta-D-manno-heptose 7-phosphate: step 4/4. Its function is as follows. Catalyzes the interconversion between ADP-D-glycero-beta-D-manno-heptose and ADP-L-glycero-beta-D-manno-heptose via an epimerization at carbon 6 of the heptose. This Ralstonia pickettii (strain 12J) protein is ADP-L-glycero-D-manno-heptose-6-epimerase.